We begin with the raw amino-acid sequence, 328 residues long: tRNA uridine(34) hydroxylase (328 aa).

Positions leucine 130–glutamate 224 constitute a Rhodanese domain. The Cysteine persulfide intermediate role is filled by cysteine 184.

This sequence belongs to the TrhO family.

The enzyme catalyses uridine(34) in tRNA + AH2 + O2 = 5-hydroxyuridine(34) in tRNA + A + H2O. Its function is as follows. Catalyzes oxygen-dependent 5-hydroxyuridine (ho5U) modification at position 34 in tRNAs. This is tRNA uridine(34) hydroxylase from Streptococcus pyogenes serotype M6 (strain ATCC BAA-946 / MGAS10394).